Here is a 707-residue protein sequence, read N- to C-terminus: MTNTLQFKEFSSFVNISFWHELSNKKLDELKLSEESIPLNGHYTFSPSQQLDPFLCLEFNAFLRNNVTNSTENQYVLPPRSYLSHGTLYNYNTVDDFKQSPKIKLFNDASKRIWNDINNGNIDKDTSLLNRFILLTYADIKNHQFYYMFGIPALLPSQPIQQFTEKPESINIESLKSFSNQILPQYFCLKQQQQESSTTTTTSFELIGSIEEKGNQYLNECLENDLIPLVGFCDPCSLPLNPGWPLRNFLIYLSIKYPMLKKIKVLCYRGNGSTSNSILLSLELPSMGEQLIKKQQEEDAGEWSGKSVGWEKDSNGKIAPRFVSLASTMDPLKLAEQSVDLNLKLMRWRVMPSLELEKIKTTSCLLLGSGTLGCNVARSLMSWGVRNITFVDSSKVSYSNPVRQSLFTFADCSPKAKEKSIAAADALKKIFPAINANAHVFSIPMPGHSVPQSEYQSIRNTIELLENLIKQHDVIYLLTDSRESRWLPTMLSRAHGKLCINAALGFDSYLVIRHGIKDQCQNELNPSISSKLGYQGSDLGCYFCNDVIAPTDTLKDRTLDQMCTVTRPGLSMMASSIAVELLISTIHHPYGGRAKGETETDVYVQGSTPLGIIPHQLRGFISHYQTLPLFSNPYKHCTACSDYIIDEYNSKGFDFIINVMNDSSCLTKICGIDDLKNTEVNIDWDIDISDDDDDNNNNNNKEKNDDF.

The short motif at 368-373 is the GXGXXG motif element; the sequence is GSGTLG. Cysteine 563 acts as the Glycyl thioester intermediate in catalysis. Acidic residues predominate over residues 686-695; sequence IDISDDDDDN. Residues 686-707 form a disordered region; it reads IDISDDDDDNNNNNNKEKNDDF.

The protein belongs to the ATG7 family. As to quaternary structure, homodimer. Interacts with atg8 through a thioester bond between Cys-563 and the C-terminal 'Gly-120' of atg8 and with ATG12 through a thioester bond between Cys-563 and the C-terminal 'Gly-124' of atg12.

Its subcellular location is the cytoplasm. It localises to the preautophagosomal structure. Functionally, E1-like activating enzyme involved in the 2 ubiquitin-like systems required for autophagy. Activates atg12 for its conjugation with atg5 and atg8 for its conjugation with phosphatidylethanolamine. Both systems are needed for the atg8 association to autophagosomes membranes. Required for normal survival when exposed to pathogenic bacteria S.typhimurium by promoting autophagic degradation of intracellular S.typhimurium. The polypeptide is Ubiquitin-like modifier-activating enzyme atg7 (atg7) (Dictyostelium discoideum (Social amoeba)).